Here is a 692-residue protein sequence, read N- to C-terminus: Elongation factor G (692 aa).

The 275-residue stretch at 8–282 folds into the tr-type G domain; the sequence is EKVRNIGIAA…AVVDYLPAPS (275 aa). GTP is bound by residues 17–24, 81–85, and 135–138; these read AHIDAGKT, DTPGH, and NKMD.

This sequence belongs to the TRAFAC class translation factor GTPase superfamily. Classic translation factor GTPase family. EF-G/EF-2 subfamily.

The protein localises to the cytoplasm. Functionally, catalyzes the GTP-dependent ribosomal translocation step during translation elongation. During this step, the ribosome changes from the pre-translocational (PRE) to the post-translocational (POST) state as the newly formed A-site-bound peptidyl-tRNA and P-site-bound deacylated tRNA move to the P and E sites, respectively. Catalyzes the coordinated movement of the two tRNA molecules, the mRNA and conformational changes in the ribosome. The sequence is that of Elongation factor G from Nostoc punctiforme (strain ATCC 29133 / PCC 73102).